The following is a 545-amino-acid chain: E3 ubiquitin-protein ligase ipaH9.8 (545 aa).

The tract at residues 1 to 242 (MLPINNNFSL…YHGPRIYFSM (242 aa)) is interaction with target proteins. 8 LRR repeats span residues 57 to 77 (NSDE…NLPA), 78 to 99 (QITL…PVTL), 100 to 117 (KKLY…VLPP), 118 to 139 (ALES…PDSL), 140 to 157 (LTMN…SLPL), 158 to 179 (ALKN…SEGN), 182 to 203 (VVRE…ILNL), and 205 to 228 (NECS…QRLT). Residues 243-250 (SDGQQNTL) form a linker region. The interval 251-545 (HRPLADAVTA…SENGSQLHHS (295 aa)) is E3 ubiquitin-protein ligase catalytic domain. The NEL domain maps to 253-545 (PLADAVTAWF…SENGSQLHHS (293 aa)). Catalysis depends on cysteine 337, which acts as the Glycyl thioester intermediate.

Belongs to the LRR-containing bacterial E3 ligase family. As to quaternary structure, also interacts with human and mouse U2AF1 (U2AF35). Ubiquitinated in the presence of host E1 ubiquitin-activating enzyme, E2 ubiquitin-conjugating enzyme and ubiquitin.

It is found in the secreted. The protein localises to the host cytoplasm. The protein resides in the host nucleus. It carries out the reaction S-ubiquitinyl-[E2 ubiquitin-conjugating enzyme]-L-cysteine + [acceptor protein]-L-lysine = [E2 ubiquitin-conjugating enzyme]-L-cysteine + N(6)-ubiquitinyl-[acceptor protein]-L-lysine.. Its activity is regulated as follows. Exists in an autoinhibited state in the absence of substrate protein, due to interactions of the leucine-rich repeats with NEL domain. Is activated upon binding to a substrate protein. Effector E3 ubiquitin ligase that interferes with host's ubiquitination pathway and modulates the acute inflammatory responses, thus facilitating bacterial colonization within the host cell. Interacts with IKBKG (NEMO) and TNIP1 (ABIN-1), a ubiquitin-binding adapter protein, which results in TNIP1-dependent 'Lys-27'-linked polyubiquitination of IKBKG. Consequently, polyubiquitinated IKBKG undergoes proteasome-dependent degradation, which perturbs NF-kappa-B activation during bacterial infection. Mediates polyubiquitination of host U2AF1, leading to its proteasomal degradation. Catalyzes 'Lys-48'-linked polyubiquitination and subsequent degradation of a subset of host guanylate-binding proteins (GBP1, GBP2, GBP4 and GBP6), thereby suppressing host cell defense. In contrast, host GBP3 and GBP7 are not ubiquitinated by IpaH9.8. Uses UBE2D2 (UBCH5B) as an E2 ubiquitin-conjugating enzyme. This Shigella boydii serotype 4 (strain Sb227) protein is E3 ubiquitin-protein ligase ipaH9.8 (ipaH9.8).